Consider the following 758-residue polypeptide: Phosphoribosylformylglycinamidine synthase subunit PurL (758 aa).

H57 is a catalytic residue. 2 residues coordinate ATP: Y60 and R104. E106 is a Mg(2+) binding site. Substrate contacts are provided by residues 107–110 (SHNH) and R129. Catalysis depends on H108, which acts as the Proton acceptor. D130 serves as a coordination point for Mg(2+). Q254 is a binding site for substrate. D282 contacts Mg(2+). Residue 326–328 (ESQ) participates in substrate binding. Residues N509 and G546 each coordinate ATP. Residue N547 coordinates Mg(2+). S549 provides a ligand contact to substrate.

Belongs to the FGAMS family. As to quaternary structure, monomer. Part of the FGAM synthase complex composed of 1 PurL, 1 PurQ and 2 PurS subunits.

It is found in the cytoplasm. The enzyme catalyses N(2)-formyl-N(1)-(5-phospho-beta-D-ribosyl)glycinamide + L-glutamine + ATP + H2O = 2-formamido-N(1)-(5-O-phospho-beta-D-ribosyl)acetamidine + L-glutamate + ADP + phosphate + H(+). It participates in purine metabolism; IMP biosynthesis via de novo pathway; 5-amino-1-(5-phospho-D-ribosyl)imidazole from N(2)-formyl-N(1)-(5-phospho-D-ribosyl)glycinamide: step 1/2. Functionally, part of the phosphoribosylformylglycinamidine synthase complex involved in the purines biosynthetic pathway. Catalyzes the ATP-dependent conversion of formylglycinamide ribonucleotide (FGAR) and glutamine to yield formylglycinamidine ribonucleotide (FGAM) and glutamate. The FGAM synthase complex is composed of three subunits. PurQ produces an ammonia molecule by converting glutamine to glutamate. PurL transfers the ammonia molecule to FGAR to form FGAM in an ATP-dependent manner. PurS interacts with PurQ and PurL and is thought to assist in the transfer of the ammonia molecule from PurQ to PurL. The protein is Phosphoribosylformylglycinamidine synthase subunit PurL of Corynebacterium ammoniagenes (Brevibacterium ammoniagenes).